Reading from the N-terminus, the 300-residue chain is Spermatogenesis-associated serine-rich protein 1 (300 aa).

Residues 1–10 (MSPSMLTGNS) are compositionally biased toward polar residues. Disordered stretches follow at residues 1 to 42 (MSPS…MTEV) and 64 to 91 (TPSGKSVSSSSSVETGPSVSEPPGLPRV). Over residues 27 to 42 (QLEKVPEKRDSGMTEV) the composition is skewed to basic and acidic residues. Residues 64-85 (TPSGKSVSSSSSVETGPSVSEP) are compositionally biased toward low complexity. A Phosphoserine modification is found at Ser-113.

The protein is Spermatogenesis-associated serine-rich protein 1 (SPATS1) of Homo sapiens (Human).